The chain runs to 159 residues: NAD(P)H-quinone oxidoreductase subunit J, chloroplastic (159 aa).

The protein belongs to the complex I 30 kDa subunit family. As to quaternary structure, NDH is composed of at least 16 different subunits, 5 of which are encoded in the nucleus.

Its subcellular location is the plastid. The protein resides in the chloroplast thylakoid membrane. It catalyses the reaction a plastoquinone + NADH + (n+1) H(+)(in) = a plastoquinol + NAD(+) + n H(+)(out). The enzyme catalyses a plastoquinone + NADPH + (n+1) H(+)(in) = a plastoquinol + NADP(+) + n H(+)(out). In terms of biological role, NDH shuttles electrons from NAD(P)H:plastoquinone, via FMN and iron-sulfur (Fe-S) centers, to quinones in the photosynthetic chain and possibly in a chloroplast respiratory chain. The immediate electron acceptor for the enzyme in this species is believed to be plastoquinone. Couples the redox reaction to proton translocation, and thus conserves the redox energy in a proton gradient. The polypeptide is NAD(P)H-quinone oxidoreductase subunit J, chloroplastic (Triticum aestivum (Wheat)).